The chain runs to 206 residues: Large ribosomal subunit protein uL4 (206 aa).

The disordered stretch occupies residues 48 to 97 (THAVKNRSLVSGGGKKPWKQKHTGRARQGSTRASQWVGGGKAMGPKPRDY). Basic residues predominate over residues 63–72 (KPWKQKHTGR).

It belongs to the universal ribosomal protein uL4 family. In terms of assembly, part of the 50S ribosomal subunit.

Functionally, one of the primary rRNA binding proteins, this protein initially binds near the 5'-end of the 23S rRNA. It is important during the early stages of 50S assembly. It makes multiple contacts with different domains of the 23S rRNA in the assembled 50S subunit and ribosome. Forms part of the polypeptide exit tunnel. This is Large ribosomal subunit protein uL4 from Anaeromyxobacter sp. (strain K).